A 123-amino-acid chain; its full sequence is Protein Wnt-3b (123 aa).

A lipid anchor (O-palmitoleoyl serine; by PORCN) is attached at Ser-1. A disulfide bridge links Cys-89 with Cys-104. N-linked (GlcNAc...) asparagine glycosylation is present at Asn-90.

Belongs to the Wnt family. Post-translationally, palmitoleoylation is required for efficient binding to frizzled receptors. Depalmitoleoylation leads to Wnt signaling pathway inhibition.

Its subcellular location is the secreted. The protein resides in the extracellular space. It is found in the extracellular matrix. Its function is as follows. Ligand for members of the frizzled family of seven transmembrane receptors. Probable developmental protein. May be a signaling molecule which affects the development of discrete regions of tissues. Is likely to signal over only few cell diameters. This Meleagris gallopavo (Wild turkey) protein is Protein Wnt-3b (WNT3B).